Consider the following 229-residue polypeptide: Elongation factor 1-delta 1 (229 aa).

Residues 80 to 109 are disordered; it reads ESTAVPSASTPDVADAKAPAADDDDDDDVD. The segment covering 100–109 has biased composition (acidic residues); it reads ADDDDDDDVD.

Belongs to the EF-1-beta/EF-1-delta family. As to quaternary structure, EF-1 is composed of 4 subunits: alpha, beta (1B-alpha=beta'), delta (1B-beta), and gamma (1B-gamma).

Its function is as follows. EF-1-beta and EF-1-beta' stimulate the exchange of GDP bound to EF-1-alpha to GTP. The sequence is that of Elongation factor 1-delta 1 from Oryza sativa subsp. japonica (Rice).